Consider the following 378-residue polypeptide: Leukosialin (378 aa).

An N-terminal signal peptide occupies residues 1-7 (WAQVVSQ). Residues 8–231 (ENLPNTMTML…TVPPRPGSSG (224 aa)) are Extracellular-facing. O-linked (GalNAc...) threonine glycans are attached at residues Thr13, Thr15, and Thr20. The segment at 13–33 (TMTMLPFTPNSESPSTSEALS) is disordered. O-linked (GalNAc...) serine glycosylation is found at Ser23, Ser25, and Ser27. Thr28 carries O-linked (GalNAc...) threonine glycosylation. Ser29 and Ser33 each carry an O-linked (GalNAc...) serine glycan. Thr34 carries O-linked (GalNAc...) threonine glycosylation. Residues Ser36 and Ser37 are each glycosylated (O-linked (GalNAc...) serine). O-linked (GalNAc...) threonine glycosylation occurs at Thr40. 2 O-linked (GalNAc...) serine glycosylation sites follow: Ser108 and Ser113. Thr118, Thr120, and Thr124 each carry an O-linked (GalNAc...) threonine glycan. 2 O-linked (GalNAc...) serine glycosylation sites follow: Ser125 and Ser126. O-linked (GalNAc...) threonine glycosylation occurs at Thr174. Residues Ser176 and Ser180 are each glycosylated (O-linked (GalNAc...) serine). Thr183 carries O-linked (GalNAc...) threonine glycosylation. A glycan (O-linked (GalNAc...) serine) is linked at Ser187. O-linked (GalNAc...) threonine glycosylation occurs at Thr189. The helical transmembrane segment at 232–254 (MLLVSMLIALTVVLVLVALLLLW) threads the bilayer. The tract at residues 255 to 285 (RQRQKRRTGALTLSRGGKRNGTVDAWAGPAR) is required for interaction with EZR, MSN and RDX and for co-localization to microvilli. Residues 255–378 (RQRQKRRTGA…AKDGAAPQSL (124 aa)) are Cytoplasmic-facing. Positions 259–273 (KRRTGALTLSRGGKR) match the Nuclear localization signal motif. The tract at residues 265 to 378 (LTLSRGGKRN…AKDGAAPQSL (114 aa)) is disordered. Ser268 carries the post-translational modification Phosphoserine. Thr276 carries the phosphothreonine modification. Residues 310 to 321 (GSGQRPTLTTFF) are compositionally biased toward polar residues. Ser311 carries the post-translational modification Phosphoserine. Position 316 is a phosphothreonine (Thr316). Ser322 and Ser326 each carry phosphoserine. Ser330 carries the phosphoserine; by PKC/PRKCQ modification. The residue at position 354 (Ser354) is a Phosphoserine. Position 361 is a phosphothreonine (Thr361).

Interacts with SIGLEC1. In terms of assembly, monomer. Interacts with CTNNB1. Interacts with EZR, MSN and RDX (via FERM domain). In terms of processing, has a high content of sialic acid and O-linked carbohydrate structures. Phosphorylation at Ser-330 is regulated by chemokines, requires its association with ERM proteins (EZR, RDX and MSN) and is essential for its function in the regulation of T-cell trafficking to lymph nodes. Post-translationally, cleavage by CTSG releases its extracellular domain and triggers its intramembrane proteolysis by gamma-secretase releasing the CD43 cytoplasmic tail chain (CD43-ct) which translocates to the nucleus. In terms of processing, sumoylated. In terms of tissue distribution, cell surface of thymocytes, T-lymphocytes, neutrophils, plasma cells and myelomas.

The protein resides in the membrane. It is found in the cell projection. It localises to the microvillus. The protein localises to the uropodium. Its subcellular location is the nucleus. The protein resides in the PML body. Functionally, predominant cell surface sialoprotein of leukocytes which regulates multiple T-cell functions, including T-cell activation, proliferation, differentiation, trafficking and migration. Positively regulates T-cell trafficking to lymph-nodes via its association with ERM proteins (EZR, RDX and MSN). Negatively regulates Th2 cell differentiation and predisposes the differentiation of T-cells towards a Th1 lineage commitment. Promotes the expression of IFN-gamma by T-cells during T-cell receptor (TCR) activation of naive cells and induces the expression of IFN-gamma by CD4(+) T-cells and to a lesser extent by CD8(+) T-cells. Plays a role in preparing T-cells for cytokine sensing and differentiation into effector cells by inducing the expression of cytokine receptors IFNGR and IL4R, promoting IFNGR and IL4R signaling and by mediating the clustering of IFNGR with TCR. Acts as a major E-selectin ligand responsible for Th17 cell rolling on activated vasculature and recruitment during inflammation. Mediates Th17 cells, but not Th1 cells, adhesion to E-selectin. Acts as a T-cell counter-receptor for SIGLEC1. In terms of biological role, protects cells from apoptotic signals, promoting cell survival. The polypeptide is Leukosialin (Spn) (Rattus norvegicus (Rat)).